The primary structure comprises 247 residues: Uridylate kinase (247 aa).

ATP is bound at residue 18–21 (KLSG). Position 60 (G60) interacts with UMP. 2 residues coordinate ATP: G61 and R65. Residues D80 and 141–148 (TGNPFFTT) each bind UMP. Positions 168, 174, and 177 each coordinate ATP.

Belongs to the UMP kinase family. Homohexamer.

Its subcellular location is the cytoplasm. It carries out the reaction UMP + ATP = UDP + ADP. Its pathway is pyrimidine metabolism; CTP biosynthesis via de novo pathway; UDP from UMP (UMPK route): step 1/1. With respect to regulation, inhibited by UTP. Catalyzes the reversible phosphorylation of UMP to UDP. The polypeptide is Uridylate kinase (Pseudomonas fluorescens (strain ATCC BAA-477 / NRRL B-23932 / Pf-5)).